The sequence spans 61 residues: Photosystem II reaction center protein K (61 aa).

The propeptide occupies 1-24 (MPNILSLTCICFNSVIYPTSFFFA). A helical transmembrane segment spans residues 32-52 (IFNPIVDFMPVIPVLFFLLAF).

Belongs to the PsbK family. In terms of assembly, PSII is composed of 1 copy each of membrane proteins PsbA, PsbB, PsbC, PsbD, PsbE, PsbF, PsbH, PsbI, PsbJ, PsbK, PsbL, PsbM, PsbT, PsbX, PsbY, PsbZ, Psb30/Ycf12, at least 3 peripheral proteins of the oxygen-evolving complex and a large number of cofactors. It forms dimeric complexes.

The protein resides in the plastid. It is found in the chloroplast thylakoid membrane. Functionally, one of the components of the core complex of photosystem II (PSII). PSII is a light-driven water:plastoquinone oxidoreductase that uses light energy to abstract electrons from H(2)O, generating O(2) and a proton gradient subsequently used for ATP formation. It consists of a core antenna complex that captures photons, and an electron transfer chain that converts photonic excitation into a charge separation. The chain is Photosystem II reaction center protein K from Oryza nivara (Indian wild rice).